Reading from the N-terminus, the 257-residue chain is Ribonuclease HII (257 aa).

Positions 71-257 (ELIAGIDEVG…EPIKSMVNFK (187 aa)) constitute an RNase H type-2 domain. The a divalent metal cation site is built by aspartate 77, glutamate 78, and aspartate 169.

It belongs to the RNase HII family. Mn(2+) is required as a cofactor. The cofactor is Mg(2+).

It is found in the cytoplasm. The enzyme catalyses Endonucleolytic cleavage to 5'-phosphomonoester.. Its function is as follows. Endonuclease that specifically degrades the RNA of RNA-DNA hybrids. The polypeptide is Ribonuclease HII (rnhB) (Lactococcus lactis subsp. cremoris (strain MG1363)).